Reading from the N-terminus, the 129-residue chain is Natriuretic peptides B (129 aa).

A signal peptide spans 1 to 26; the sequence is MDPQKALSRTLLLLLFLHLSLLGCRS. Cys-107 and Cys-123 form a disulfide bridge.

It belongs to the natriuretic peptide family. The precursor molecule is proteolytically cleaved, possibly by FURIN or CORIN, to produce the active peptide. May undergo further proteolytic cleavage by various proteases such as DPP4, MME and possibly FAP, to give rise to a variety of shorter peptides. May be cleaved at Pro-99 by the prolyl endopeptidase FAP (seprase) activity (in vitro). May be degraded by IDE. During IDE degradation, the resulting products initially increase the activation of NPR1 and can also stimulate NPR2 to produce cGMP before the fragments are completely degraded and inactivated by IDE (in vitro).

It is found in the secreted. Functionally, cardiac hormone that plays a key role in mediating cardio-renal homeostasis. May also function as a paracrine antifibrotic factor in the heart. Acts by specifically binding and stimulating NPR1 to produce cGMP, which in turn activates effector proteins that drive various biological responses. Involved in regulating the extracellular fluid volume and maintaining the fluid-electrolyte balance through natriuresis, diuresis, vasorelaxation, and inhibition of renin and aldosterone secretion. Binds the clearance receptor NPR3. The protein is Natriuretic peptides B (NPPB) of Ovis aries (Sheep).